The following is a 699-amino-acid chain: Elongation factor G (699 aa).

A tr-type G domain is found at glutamate 8–isoleucine 283. Residues alanine 17–threonine 24, aspartate 81–histidine 85, and asparagine 135–aspartate 138 contribute to the GTP site.

It belongs to the TRAFAC class translation factor GTPase superfamily. Classic translation factor GTPase family. EF-G/EF-2 subfamily.

Its subcellular location is the cytoplasm. Its function is as follows. Catalyzes the GTP-dependent ribosomal translocation step during translation elongation. During this step, the ribosome changes from the pre-translocational (PRE) to the post-translocational (POST) state as the newly formed A-site-bound peptidyl-tRNA and P-site-bound deacylated tRNA move to the P and E sites, respectively. Catalyzes the coordinated movement of the two tRNA molecules, the mRNA and conformational changes in the ribosome. This is Elongation factor G from Rickettsia akari (strain Hartford).